A 633-amino-acid polypeptide reads, in one-letter code: Probable potassium transport system protein Kup 2 (633 aa).

11 consecutive transmembrane segments (helical) span residues 59–79, 110–130, 145–165, 173–193, 219–239, 256–276, 287–307, 345–365, 374–394, 402–422, and 429–449; these read ISAI…ILIM, ILLV…LTPA, TALQ…LFLF, IGAL…AAGI, GFAS…AEAL, FGLV…LIIV, LLYP…ATVI, IYIP…VLGF, AYGV…FFVI, LLLS…FVSS, and EGGW…LTWV.

Belongs to the HAK/KUP transporter (TC 2.A.72) family.

The protein localises to the cell inner membrane. The catalysed reaction is K(+)(in) + H(+)(in) = K(+)(out) + H(+)(out). Transport of potassium into the cell. Likely operates as a K(+):H(+) symporter. This is Probable potassium transport system protein Kup 2 from Cupriavidus necator (strain ATCC 17699 / DSM 428 / KCTC 22496 / NCIMB 10442 / H16 / Stanier 337) (Ralstonia eutropha).